The following is a 450-amino-acid chain: Interferon-induced protein 75 (450 aa).

The HSR domain maps to 1–108 (MFTLTKALEK…IFRSFRNVGY (108 aa)). 2 disordered regions span residues 131-156 (CSLQ…APRV) and 170-225 (LDEQ…VKDD). A compositionally biased stretch (low complexity) spans 143-154 (QLSLPSHLSSAP). Residues Ser175 and Ser177 each carry the phosphoserine modification. Residues 197–212 (SRDHQRKDKEDSREMP) are compositionally biased toward basic and acidic residues. Position 226 is a phosphoserine (Ser226). Disordered stretches follow at residues 238-283 (VLCT…HGVQ) and 318-360 (AQTS…KNDA). Residues 245 to 267 (KKARRKKRLNWSNSKRGRQKKKP) show a composition bias toward basic residues. Residues 251–266 (KRLNWSNSKRGRQKKK) carry the Nuclear localization signal motif. The span at 343 to 353 (TSTAGKTTQVP) shows a compositional bias: polar residues. The SAND domain maps to 358–439 (NDAVDFLSPT…RQLEQKGLLF (82 aa)).

It localises to the nucleus. This is Interferon-induced protein 75 (Ifi75) from Mus caroli (Ryukyu mouse).